The following is a 119-amino-acid chain: Flagellar transcriptional regulator FlhD (119 aa).

Belongs to the FlhD family. As to quaternary structure, homodimer; disulfide-linked. Forms a heterohexamer composed of two FlhC and four FlhD subunits. Each FlhC binds a FlhD dimer, forming a heterotrimer, and a hexamer assembles by dimerization of two heterotrimers.

It is found in the cytoplasm. Its function is as follows. Functions in complex with FlhC as a master transcriptional regulator that regulates transcription of several flagellar and non-flagellar operons by binding to their promoter region. Activates expression of class 2 flagellar genes, including fliA, which is a flagellum-specific sigma factor that turns on the class 3 genes. Also regulates genes whose products function in a variety of physiological pathways. The polypeptide is Flagellar transcriptional regulator FlhD (Pectobacterium atrosepticum (strain SCRI 1043 / ATCC BAA-672) (Erwinia carotovora subsp. atroseptica)).